The sequence spans 311 residues: tRNA-cytidine(32) 2-sulfurtransferase (311 aa).

Residues 47–52 carry the PP-loop motif motif; it reads SGGKDS. [4Fe-4S] cluster-binding residues include Cys-122, Cys-125, and Cys-213.

This sequence belongs to the TtcA family. Homodimer. Requires Mg(2+) as cofactor. [4Fe-4S] cluster is required as a cofactor.

It localises to the cytoplasm. The enzyme catalyses cytidine(32) in tRNA + S-sulfanyl-L-cysteinyl-[cysteine desulfurase] + AH2 + ATP = 2-thiocytidine(32) in tRNA + L-cysteinyl-[cysteine desulfurase] + A + AMP + diphosphate + H(+). It functions in the pathway tRNA modification. In terms of biological role, catalyzes the ATP-dependent 2-thiolation of cytidine in position 32 of tRNA, to form 2-thiocytidine (s(2)C32). The sulfur atoms are provided by the cysteine/cysteine desulfurase (IscS) system. This is tRNA-cytidine(32) 2-sulfurtransferase from Escherichia coli O45:K1 (strain S88 / ExPEC).